The following is a 127-amino-acid chain: Small ribosomal subunit protein uS12 (127 aa).

The interval 8 to 28 (IRTEREKARQKTKSPALKQCP) is disordered. Residue D89 is modified to 3-methylthioaspartic acid. The interval 102–127 (LDTAGVKDRKQGRSKYGTKRPKEAKK) is disordered. A compositionally biased stretch (basic residues) spans 113–127 (GRSKYGTKRPKEAKK).

Belongs to the universal ribosomal protein uS12 family. In terms of assembly, part of the 30S ribosomal subunit. Contacts proteins S8 and S17. May interact with IF1 in the 30S initiation complex.

Functionally, with S4 and S5 plays an important role in translational accuracy. Its function is as follows. Interacts with and stabilizes bases of the 16S rRNA that are involved in tRNA selection in the A site and with the mRNA backbone. Located at the interface of the 30S and 50S subunits, it traverses the body of the 30S subunit contacting proteins on the other side and probably holding the rRNA structure together. The combined cluster of proteins S8, S12 and S17 appears to hold together the shoulder and platform of the 30S subunit. This chain is Small ribosomal subunit protein uS12, found in Nostoc sp. (strain PCC 7120 / SAG 25.82 / UTEX 2576).